The sequence spans 296 residues: Nucleotide-binding protein M6_Spy0559 (296 aa).

An ATP-binding site is contributed by 13-20; sequence GMSGAGKT. 63–66 is a binding site for GTP; it reads DMRS.

This sequence belongs to the RapZ-like family.

Its function is as follows. Displays ATPase and GTPase activities. In Streptococcus pyogenes serotype M6 (strain ATCC BAA-946 / MGAS10394), this protein is Nucleotide-binding protein M6_Spy0559.